We begin with the raw amino-acid sequence, 607 residues long: All-trans-retinol 13,14-reductase (607 aa).

An N-terminal signal peptide occupies residues 1-22; the sequence is MWFAVVAIFLALVAFLYRYVVG.

It belongs to the carotenoid/retinoid oxidoreductase family. CrtISO subfamily. Requires NAD(+) as cofactor. The cofactor is NADP(+). FAD is required as a cofactor.

The protein resides in the endoplasmic reticulum membrane. The enzyme catalyses all-trans-13,14-dihydroretinol + A = all-trans-retinol + AH2. In terms of biological role, catalyzes the saturation of all-trans-retinol to all-trans-13,14-dihydroretinol. In addition, saturates the 7-8 double bond of all-trans-retinol to produce all-trans-7,8-dihydroretinol. Can also use vitamin A2 (all-trans-3,4-didehydroretinol) as a substrate, to produce all-trans-13,14-dihydro-3,4-didehydroretinol or all-trans-7,8-dihydro-3,4-didehydroretinol. May play a role in vitamin A metabolism. This chain is All-trans-retinol 13,14-reductase, found in Danio rerio (Zebrafish).